Consider the following 145-residue polypeptide: uncharacterized protein (145 aa).

An N-terminal signal peptide occupies residues 1-20; sequence MKTCTVICCTALVLGLTAYA.

This is an uncharacterized protein from Aedes vexans (Inland floodwater mosquito).